An 855-amino-acid polypeptide reads, in one-letter code: DNA mismatch repair protein MutS (855 aa).

Residue 616–623 participates in ATP binding; it reads GPNMGGKS.

The protein belongs to the DNA mismatch repair MutS family.

Its function is as follows. This protein is involved in the repair of mismatches in DNA. It is possible that it carries out the mismatch recognition step. This protein has a weak ATPase activity. This chain is DNA mismatch repair protein MutS, found in Salmonella schwarzengrund (strain CVM19633).